The following is a 385-amino-acid chain: Torsin-3A (385 aa).

Residues 1–21 form the signal peptide; that stretch reads MFLGALWLLLLLPLRPPGAQG. N110 carries an N-linked (GlcNAc...) asparagine glycan. Residue 155–162 participates in ATP binding; it reads GWSGTGKN.

The protein belongs to the ClpA/ClpB family. Torsin subfamily. As to quaternary structure, interacts with TOR1AIP1. N-glycosylated.

It is found in the cytoplasm. Its subcellular location is the endoplasmic reticulum lumen. The chain is Torsin-3A (Tor3a) from Mus musculus (Mouse).